Here is a 667-residue protein sequence, read N- to C-terminus: MSRKDLANAIRALSMDAVQKANSGHPGAPMGMADIAEVLWNDFLKHNPTDPTWYDRDRFILSNGHASMLLYSLLHLTGYDLPLEELKNFRQLHSKTPGHPEIGYTPGVETTTGPLGQGLANAVGLAIAERTLAAQFNQPDHEIVDHFTYVFMGDGCLMEGISHEVCSLAGTLGLGKLIGFYDHNGISIDGETEGWFTDDTAKRFEAYHWHVIHEIDGHDPQAVKEAILEAQSVKDKPSLIICRTVIGFGSPNKAGKEEAHGAPLGEEEVALARQKLGWHHPPFEIPKEIYHAWDAREKGEKAQQSWNEKFAAYKKAHPQLAEEFTRRMSGGLPKDWEKTTQKYINELQANPAKIATRKASQNTLNAYGPMLPELLGGSADLAPSNLTIWKGSVSLKEDPAGNYIHYGVREFGMTAIANGIAHHGGFVPYTATFLMFVEYARNAARMAALMKARQIMVYTHDSIGLGEDGPTHQAVEQLASLRLTPNFSTWRPCDQVEAAVGWKLAVERHNGPTALILSRQNLAQVERTPDQVKEIARGGYVLKDSGGKPDIILIATGSEMEITLQAAEKLAGEGRNVRVVSLPSTDIFDAQDEEYRESVLPSNVAARVAVEAGIADYWYKYVGLKGAIVGMTGYGESAPADKLFPFFGFTAENIVAKAHKVLGVKGA.

His25 serves as a coordination point for substrate. Thiamine diphosphate contacts are provided by residues His65 and 113–115; that span reads GPL. Asp154 contacts Mg(2+). 2 residues coordinate thiamine diphosphate: Gly155 and Asn184. Mg(2+) contacts are provided by Asn184 and Ile186. Position 260 (His260) interacts with substrate. His260 contributes to the thiamine diphosphate binding site. Lys342 is modified (N6-acetyllysine). Residues Arg357 and Ser384 each coordinate substrate. The Proton donor role is filled by Glu410. Phe436 is a thiamine diphosphate binding site. Substrate is bound by residues His460, Asp468, and Arg519.

This sequence belongs to the transketolase family. Homodimer. Mg(2+) serves as cofactor. Ca(2+) is required as a cofactor. Requires Mn(2+) as cofactor. The cofactor is Co(2+). It depends on thiamine diphosphate as a cofactor.

The catalysed reaction is D-sedoheptulose 7-phosphate + D-glyceraldehyde 3-phosphate = aldehydo-D-ribose 5-phosphate + D-xylulose 5-phosphate. In terms of biological role, catalyzes the reversible transfer of a two-carbon ketol group from sedoheptulose-7-phosphate to glyceraldehyde-3-phosphate, producing xylulose-5-phosphate and ribose-5-phosphate. Catalyzes the transfer of a two-carbon ketol group from a ketose donor to an aldose acceptor, via a covalent intermediate with the cofactor thiamine pyrophosphate. The polypeptide is Transketolase 2 (Escherichia coli (strain K12)).